The chain runs to 202 residues: Snake venom metalloproteinase TM-1 (202 aa).

At glutamine 1 the chain carries Pyrrolidone carboxylic acid. The 196-residue stretch at 7–202 (RYVMLAIVAD…TNPQCILNAP (196 aa)) folds into the Peptidase M12B domain. 3 cysteine pairs are disulfide-bonded: cysteine 118/cysteine 197, cysteine 159/cysteine 181, and cysteine 161/cysteine 164. Residue histidine 143 coordinates Zn(2+). The active site involves glutamate 144. Positions 147 and 153 each coordinate Zn(2+).

This sequence belongs to the venom metalloproteinase (M12B) family. P-I subfamily. In terms of assembly, monomer. Requires Zn(2+) as cofactor. Post-translationally, the N-terminus is blocked. In terms of processing, not glycosylated. In terms of tissue distribution, expressed by the venom gland.

Its subcellular location is the secreted. Its activity is regulated as follows. Inhibited by EDTA and 1,10-phenanthroline. Is also inhibited by endogenous tripeptide inhibitors pyroGlu-Asn-Trp, pyroGlu-Gln-Trp, and pyroGlu-Lys-Trp. Its function is as follows. Potent fibrinogenolytic protease which cleaves mainly the Aalpha (FGA) and Bbeta (FGB) chains of fibrinogen and slightly the gamma chain (FGG). Shows preference for substrates having a moderate-size and hydrophobic residue at the P1' position. Preferentially cleaves Ala-|-Leu and Tyr-|-Leu bonds. Is more susceptible to tripeptide inhibitors than TM-3 (AC O57413). The chain is Snake venom metalloproteinase TM-1 from Protobothrops mucrosquamatus (Taiwan habu).